The chain runs to 229 residues: Uracil-DNA glycosylase (229 aa).

The Proton acceptor role is filled by aspartate 67.

Belongs to the uracil-DNA glycosylase (UDG) superfamily. UNG family.

It localises to the cytoplasm. The enzyme catalyses Hydrolyzes single-stranded DNA or mismatched double-stranded DNA and polynucleotides, releasing free uracil.. Functionally, excises uracil residues from the DNA which can arise as a result of misincorporation of dUMP residues by DNA polymerase or due to deamination of cytosine. This chain is Uracil-DNA glycosylase, found in Coxiella burnetii (strain CbuK_Q154) (Coxiella burnetii (strain Q154)).